The following is a 300-amino-acid chain: uncharacterized protein (300 aa).

Disordered regions lie at residues 167–186 (DVFL…HHEH) and 224–244 (ADGS…DASH). The segment covering 224-236 (ADGSSLETSSMSS) has biased composition (polar residues).

This is an uncharacterized protein from Rattus norvegicus (Rat).